The following is a 419-amino-acid chain: Tyrosine--tRNA ligase (419 aa).

Tyr-34 is a binding site for L-tyrosine. Residues 39–48 carry the 'HIGH' region motif; the sequence is PTADSLHLGH. Tyr-169 and Gln-173 together coordinate L-tyrosine. The 'KMSKS' region motif lies at 229–233; it reads KFGKS. An ATP-binding site is contributed by Lys-232. The 68-residue stretch at 352 to 419 folds into the S4 RNA-binding domain; sequence LNIIDLLVTS…KKKYFVLNFK (68 aa).

The protein belongs to the class-I aminoacyl-tRNA synthetase family. TyrS type 1 subfamily. Homodimer.

It is found in the cytoplasm. It carries out the reaction tRNA(Tyr) + L-tyrosine + ATP = L-tyrosyl-tRNA(Tyr) + AMP + diphosphate + H(+). Catalyzes the attachment of tyrosine to tRNA(Tyr) in a two-step reaction: tyrosine is first activated by ATP to form Tyr-AMP and then transferred to the acceptor end of tRNA(Tyr). The protein is Tyrosine--tRNA ligase of Streptococcus agalactiae serotype Ia (strain ATCC 27591 / A909 / CDC SS700).